A 414-amino-acid chain; its full sequence is Cyclohex-1-ene-1-carbonyl-CoA dehydrogenase (414 aa).

Aspartate 124 serves as the catalytic Proton acceptor. FAD contacts are provided by alanine 157, threonine 158, serine 164, and threonine 190. Residue serine 164 coordinates cyclohex-1-ene-1-carbonyl-CoA. Cyclohexa-1,5-diene-1-carbonyl-CoA is bound at residue serine 164. Cyclohex-1-ene-1-carbonyl-CoA contacts are provided by lysine 211, arginine 275, and threonine 396. Lysine 211, arginine 275, and threonine 396 together coordinate cyclohexa-1,5-diene-1-carbonyl-CoA. Residues threonine 398 and glutamine 400 each coordinate FAD. Arginine 408 contributes to the cyclohex-1-ene-1-carbonyl-CoA binding site. Arginine 408 contacts cyclohexa-1,5-diene-1-carbonyl-CoA.

Belongs to the acyl-CoA dehydrogenase family. As to quaternary structure, homotetramer. The cofactor is FAD.

It carries out the reaction cyclohex-1-ene-1-carbonyl-CoA + oxidized [electron-transfer flavoprotein] + H(+) = cyclohexa-1,5-diene-1-carbonyl-CoA + reduced [electron-transfer flavoprotein]. In terms of biological role, mediates the conversion of cyclohex-1-ene-1-carbonyl-CoA (Ch1CoA) into (E)-2-cyclohex-1,5-diene-1-carbonyl-CoA in biosynthesis of cyclohexane-1-carboxylate, a by-product produced during fermentation of benzoate and crotonate to acetate. Also able to further convert (E)-2-cyclohex-1,5-diene-1-carbonyl-CoA to benzoyl-CoA. In Syntrophus aciditrophicus (strain SB), this protein is Cyclohex-1-ene-1-carbonyl-CoA dehydrogenase.